An 82-amino-acid polypeptide reads, in one-letter code: Sulfur carrier protein TusA (82 aa).

The Cysteine persulfide intermediate role is filled by Cys17.

The protein belongs to the sulfur carrier protein TusA family.

It is found in the cytoplasm. Functionally, sulfur carrier protein which probably makes part of a sulfur-relay system. The sequence is that of Sulfur carrier protein TusA from Glaesserella parasuis serovar 5 (strain SH0165) (Haemophilus parasuis).